The sequence spans 169 residues: NAD(P)H-quinone oxidoreductase subunit J, chloroplastic (169 aa).

It belongs to the complex I 30 kDa subunit family. NDH is composed of at least 16 different subunits, 5 of which are encoded in the nucleus.

The protein localises to the plastid. It is found in the chloroplast thylakoid membrane. It catalyses the reaction a plastoquinone + NADH + (n+1) H(+)(in) = a plastoquinol + NAD(+) + n H(+)(out). The catalysed reaction is a plastoquinone + NADPH + (n+1) H(+)(in) = a plastoquinol + NADP(+) + n H(+)(out). NDH shuttles electrons from NAD(P)H:plastoquinone, via FMN and iron-sulfur (Fe-S) centers, to quinones in the photosynthetic chain and possibly in a chloroplast respiratory chain. The immediate electron acceptor for the enzyme in this species is believed to be plastoquinone. Couples the redox reaction to proton translocation, and thus conserves the redox energy in a proton gradient. The polypeptide is NAD(P)H-quinone oxidoreductase subunit J, chloroplastic (Zygnema circumcarinatum (Green alga)).